Here is a 260-residue protein sequence, read N- to C-terminus: Thiamine thiazole synthase (260 aa).

NAD(+)-binding positions include Ala-36, 55–56 (EQ), Gly-63, and 154–156 (HVD). 2 residues coordinate Fe cation: Asp-156 and His-171. Met-224 provides a ligand contact to NAD(+). A glycine-binding site is contributed by Arg-234.

The protein belongs to the THI4 family. In terms of assembly, homooctamer; tetramer of dimers. Fe(2+) is required as a cofactor.

The enzyme catalyses hydrogen sulfide + glycine + NAD(+) = ADP-5-ethyl-4-methylthiazole-2-carboxylate + nicotinamide + 3 H2O + H(+). It participates in cofactor biosynthesis; thiamine diphosphate biosynthesis. In terms of biological role, involved in the biosynthesis of the thiazole moiety of thiamine. Catalyzes the conversion of NAD and glycine to adenosine diphosphate 5-(2-hydroxyethyl)-4-methylthiazole-2-carboxylate (ADT), an adenylated thiazole intermediate, using free sulfide as a source of sulfur. The chain is Thiamine thiazole synthase from Methanosarcina acetivorans (strain ATCC 35395 / DSM 2834 / JCM 12185 / C2A).